We begin with the raw amino-acid sequence, 265 residues long: Flavin-dependent thymidylate synthase (265 aa).

A ThyX domain is found at 11–224 (GFLKLIDFMG…PIAFNSFENH (214 aa)). FAD contacts are provided by residues Ser56, 79 to 81 (RHR), and Glu87. DUMP is bound at residue 76 to 79 (QWMR). The ThyX motif motif lies at 79 to 89 (RHRTARINEVS). Arg155 is a binding site for dUMP. Residues 171-173 (DLN) and His177 contribute to the FAD site. Residue Arg182 participates in dUMP binding. Arg182 acts as the Involved in ionization of N3 of dUMP, leading to its activation in catalysis.

This sequence belongs to the thymidylate synthase ThyX family. In terms of assembly, homotetramer. It depends on FAD as a cofactor.

The catalysed reaction is dUMP + (6R)-5,10-methylene-5,6,7,8-tetrahydrofolate + NADPH + H(+) = dTMP + (6S)-5,6,7,8-tetrahydrofolate + NADP(+). It participates in pyrimidine metabolism; dTTP biosynthesis. In terms of biological role, catalyzes the reductive methylation of 2'-deoxyuridine-5'-monophosphate (dUMP) to 2'-deoxythymidine-5'-monophosphate (dTMP) while utilizing 5,10-methylenetetrahydrofolate (mTHF) as the methyl donor, and NADPH and FADH(2) as the reductant. In Borreliella burgdorferi (strain ATCC 35210 / DSM 4680 / CIP 102532 / B31) (Borrelia burgdorferi), this protein is Flavin-dependent thymidylate synthase.